A 205-amino-acid polypeptide reads, in one-letter code: Large ribosomal subunit protein uL18 (205 aa).

It belongs to the universal ribosomal protein uL18 family. In terms of assembly, part of the 50S ribosomal subunit. Contacts the 5S and 23S rRNAs.

Functionally, this is one of the proteins that bind and probably mediate the attachment of the 5S RNA into the large ribosomal subunit, where it forms part of the central protuberance. The polypeptide is Large ribosomal subunit protein uL18 (Pyrobaculum aerophilum (strain ATCC 51768 / DSM 7523 / JCM 9630 / CIP 104966 / NBRC 100827 / IM2)).